Consider the following 5065-residue polypeptide: Dynein heavy chain-like protein 1 (5065 aa).

Positions 1–1957 (MELEKTHLIN…IIKMADATFE (1957 aa)) are stem. Residues 1677–1705 (QMEGFQKQLDRLSDSLSKIQKALGEYLEK) adopt a coiled-coil conformation. Residues 1958 to 2179 (YGYEYLGMCE…LRSLKSVLNS (222 aa)) form an AAA 1 region. Residue 1996–2003 (GPAGTGKT) participates in ATP binding. The interval 2203-2223 (FNETLDNNNNNDNNNERKTTT) is disordered. Residues 2204–2215 (NETLDNNNNNDN) are compositionally biased toward low complexity. AAA stretches follow at residues 2281-2632 (NEIH…YEYI), 2751-3004 (DVDR…WKLA), and 3097-3367 (IFNE…GNRY). 2319-2326 (GDVGTGKS) contacts ATP. Residues 2507–2529 (EKNQNGNENGNENEKKNINIINN) are disordered. Residues 2790–2797 (GPPGSGKT) and 3135–3142 (GASGAGKT) contribute to the ATP site. A stalk region spans residues 3386–3701 (IDEKKEEVSS…ETFINLEEAS (316 aa)). Coiled coils occupy residues 3388-3466 (EKKE…LDEQ) and 3970-3997 (TMEK…EVEN). AAA stretches follow at residues 3754 to 3983 (LSRP…EASK) and 4289 to 4507 (FNKI…VVDS). Over residues 4686–4705 (KDKNKDEDKNKNKENDDNNK) the composition is skewed to basic and acidic residues. Positions 4686–4727 (KDKNKDEDKNKNKENDDNNKKHIGNNKLVISSSERTESETSE) are disordered.

This sequence belongs to the dynein heavy chain family. As to quaternary structure, consists of at least two heavy chains and a number of intermediate and light chains.

Its subcellular location is the cytoplasm. The protein resides in the cytoskeleton. In terms of biological role, acts as a motor for the intracellular retrograde motility of vesicles and organelles along microtubules. Dynein has ATPase activity; the force-producing power stroke is thought to occur on release of ADP. The sequence is that of Dynein heavy chain-like protein 1 from Plasmodium falciparum (isolate 3D7).